The primary structure comprises 248 residues: Adenosylcobinamide-GDP ribazoletransferase (248 aa).

6 helical membrane-spanning segments follow: residues 36-56, 59-79, 113-133, 137-157, 170-190, and 199-219; these read FFLPVVASIIGGMEFLIYLGL, FLPPNVIIVLLLLFTAMITGG, FGTIAMIINLLLKYQLLYSLV, CSIAIILAPVIGRISILFLCL, IFIGNMSKPIIFLITIIALAM, and ITIISFTAVLIITYLFYLLCL.

This sequence belongs to the CobS family. The cofactor is Mg(2+).

Its subcellular location is the cell membrane. It carries out the reaction alpha-ribazole + adenosylcob(III)inamide-GDP = adenosylcob(III)alamin + GMP + H(+). The catalysed reaction is alpha-ribazole 5'-phosphate + adenosylcob(III)inamide-GDP = adenosylcob(III)alamin 5'-phosphate + GMP + H(+). It functions in the pathway cofactor biosynthesis; adenosylcobalamin biosynthesis; adenosylcobalamin from cob(II)yrinate a,c-diamide: step 7/7. In terms of biological role, joins adenosylcobinamide-GDP and alpha-ribazole to generate adenosylcobalamin (Ado-cobalamin). Also synthesizes adenosylcobalamin 5'-phosphate from adenosylcobinamide-GDP and alpha-ribazole 5'-phosphate. The sequence is that of Adenosylcobinamide-GDP ribazoletransferase from Clostridium botulinum (strain 657 / Type Ba4).